Consider the following 20-residue polypeptide: Cupiennin-6f (20 aa).

Expressed by the venom gland.

The protein localises to the secreted. In Cupiennius salei (American wandering spider), this protein is Cupiennin-6f.